The chain runs to 313 residues: Glucosyl-dolichyl phosphate glucuronosyltransferase (313 aa).

The chain crosses the membrane as a helical span at residues 284 to 304 (LIAIFVFTAAVGFGYVYGLLT).

This sequence belongs to the glycosyltransferase 2 family.

The protein resides in the cell membrane. The enzyme catalyses an archaeal dolichyl alpha-D-glucosyl phosphate + UDP-alpha-D-glucuronate = an archaeal dolichyl beta-D-glucuronosyl-(1-&gt;4)-alpha-D-glucosyl phosphate + UDP + H(+). Its pathway is cell surface structure biogenesis; S-layer biogenesis. Its function is as follows. Involved in the protein N-glycosylation pathway responsible for the assembly and attachment of an N-linked pentasaccharide that decorates the S-layer glycoprotein and flagellins. Catalyzes the transfer of a glucuronate residue (GlcA) to a glucose residue already bound to a dolichol phosphate (DolP), a compound that serves as a glycan lipid carrier in Archaea. In vitro, is able to add GlcA to DolP-Glc in which the omega-position isoprene is not saturated. However, the likely physiological lipid substrate is alpha,omega-saturated. This is Glucosyl-dolichyl phosphate glucuronosyltransferase from Haloferax volcanii (strain ATCC 29605 / DSM 3757 / JCM 8879 / NBRC 14742 / NCIMB 2012 / VKM B-1768 / DS2) (Halobacterium volcanii).